The following is a 232-amino-acid chain: Lipoprotein-releasing system ATP-binding protein LolD (232 aa).

The region spanning 11 to 231 (VYLHDIRRQY…SLENGHVVEL (221 aa)) is the ABC transporter domain. Residue 47-54 (APSGSGKS) coordinates ATP.

It belongs to the ABC transporter superfamily. Lipoprotein translocase (TC 3.A.1.125) family. As to quaternary structure, the complex is composed of two ATP-binding proteins (LolD) and two transmembrane proteins (LolC and LolE).

It localises to the cell inner membrane. Its function is as follows. Part of the ABC transporter complex LolCDE involved in the translocation of mature outer membrane-directed lipoproteins, from the inner membrane to the periplasmic chaperone, LolA. Responsible for the formation of the LolA-lipoprotein complex in an ATP-dependent manner. This is Lipoprotein-releasing system ATP-binding protein LolD from Nitrobacter hamburgensis (strain DSM 10229 / NCIMB 13809 / X14).